The sequence spans 605 residues: Dihydrogeodin oxidase (605 aa).

An N-terminal signal peptide occupies residues 1–18 (MPSLKDWVVAGLVPMTIA). 3 N-linked (GlcNAc...) asparagine glycosylation sites follow: Asn27, Asn107, and Asn112. 3 Plastocyanin-like domains span residues 65 to 183 (TVTQ…GPSS), 189 to 347 (DLGP…YDES), and 424 to 567 (YVDW…KIKP). Positions 117, 119, 161, and 163 each coordinate Cu cation. 2 N-linked (GlcNAc...) asparagine glycosylation sites follow: Asn278 and Asn467. Residues His484, His487, His489, His543, Cys544, His545, and His549 each contribute to the Cu cation site.

Belongs to the multicopper oxidase family. The cofactor is Cu cation.

It carries out the reaction 2 dihydrogeodin + O2 + 2 H(+) = 2 (+)-geodin + 2 H2O. It participates in secondary metabolite biosynthesis. Functionally, dihydrogeodin oxidase; part of the gene cluster that mediates the biosynthesis of geodin, an intermediate in the biosynthesis of other natural products. The pathway begins with the synthesis of atrochrysone thioester by the polyketide synthase (PKS) gedC. The atrochrysone carboxyl ACP thioesterase gedB then breaks the thioester bond and releases the atrochrysone carboxylic acid from gedC. The atrochrysone carboxylic acid is then converted to atrochrysone which is further transformed into emodinanthrone. The next step is performed by the emodinanthrone oxygenase gedH that catalyzes the oxidation of emodinanthrone to emodin. Emodin O-methyltransferase encoded probably by gedA then catalyzes methylation of the 8-hydroxy group of emodin to form questin. Ring cleavage of questin by questin oxidase gedK leads to desmethylsulochrin via several intermediates including questin epoxide. Another methylation step probably catalyzed by methyltransferase gedG leads to the formation of sulochrin which is further converted to dihydrogeodin by the sulochrin halogenase gedL. Finally, the dihydrogeodin oxidase gedJ catalyzes the stereospecific phenol oxidative coupling reaction converting dihydrogeodin to geodin. This is Dihydrogeodin oxidase from Aspergillus terreus (strain NIH 2624 / FGSC A1156).